Consider the following 721-residue polypeptide: Teichoic acid poly(glycerol phosphate) polymerase (721 aa).

CDP-glycerol is bound by residues 443 to 447 (WHGTP), Arg511, 545 to 546 (PT), 582 to 584 (RMH), 624 to 625 (SS), and Asp629.

The protein belongs to the CDP-glycerol glycerophosphotransferase family.

Its subcellular location is the cell membrane. The enzyme catalyses 4-O-[(2R)-glycerylphospho]-N-acetyl-beta-D-mannosaminyl-(1-&gt;4)-N-acetyl-alpha-D-glucosaminyl di-trans,octa-cis-undecaprenyl diphosphate + n CDP-glycerol = 4-O-{[(2R)-1-glycerylphospho](n)-(2R)-1-glycerylphospho}-N-acetyl-beta-D-mannosaminyl-(1-&gt;4)-N-acetyl-alpha-D-glucosaminyl undecaprenyl diphosphate + n CMP + n H(+). The protein operates within cell wall biogenesis; poly(glycerol phosphate) teichoic acid biosynthesis. Functionally, responsible for the polymerization of the main chain of the major teichoic acid by sequential transfer of glycerol phosphate units from CDP-glycerol to the disaccharide linkage unit. Synthesizes polymers of approximately 35 glycerol phosphate units in length. In Staphylococcus epidermidis (strain ATCC 35984 / DSM 28319 / BCRC 17069 / CCUG 31568 / BM 3577 / RP62A), this protein is Teichoic acid poly(glycerol phosphate) polymerase.